The sequence spans 149 residues: MPTHLSKTRKHRGHVSAGHGRVGKHRKHPGGRGLAGGQHHHRTNMDKYHPGYFGKVGMRYFHKQGNHFWKPVLNLEKLWSLIPAEKREAYLSSTNPDVIPVIDLLPLGYSKVLGKGRIPKVPLVVRARWFSKEAERKITEAGGVVELVA.

2 stretches are compositionally biased toward basic residues: residues 1–14 (MPTH…HRGH) and 21–30 (RVGKHRKHPG). The interval 1-42 (MPTHLSKTRKHRGHVSAGHGRVGKHRKHPGGRGLAGGQHHHR) is disordered.

This sequence belongs to the universal ribosomal protein uL15 family.

The sequence is that of Large ribosomal subunit protein uL15 from Blumeria hordei (Barley powdery mildew).